The following is a 537-amino-acid chain: Formimidoyltransferase-cyclodeaminase (537 aa).

The interval 1-181 (MNKLVECVPN…GASVTGARSF (181 aa)) is formiminotransferase N-subdomain. Catalysis depends on His82, which acts as the For formimidoyltransferase activity. 163–172 (GPAKFIPSYG) is a folate binding site. Residues 182-326 (LIAYNVNILG…PKKRIIDYMV (145 aa)) form a formiminotransferase C-subdomain region. The segment at 327–335 (QEDLKVTQP) is linker. The interval 336–537 (LASMSVRGFV…VLEILSNRKE (202 aa)) is cyclodeaminase/cyclohydrolase. Asp413 serves as the catalytic For cyclodeaminase activity.

It in the C-terminal section; belongs to the cyclodeaminase/cyclohydrolase family. In the N-terminal section; belongs to the formiminotransferase family. In terms of assembly, homooctamer, including four polyglutamate binding sites. The subunits are arranged as a tetramer of dimers, and form a planar ring-shaped structure.

It is found in the cytoplasm. Its subcellular location is the cytosol. It localises to the golgi apparatus. The protein localises to the cytoskeleton. The protein resides in the microtubule organizing center. It is found in the centrosome. Its subcellular location is the centriole. The catalysed reaction is 5-formimidoyltetrahydrofolate + L-glutamate = N-formimidoyl-L-glutamate + (6S)-5,6,7,8-tetrahydrofolate. The enzyme catalyses 5-formimidoyltetrahydrofolate + 2 H(+) = (6R)-5,10-methenyltetrahydrofolate + NH4(+). Its pathway is amino-acid degradation; L-histidine degradation into L-glutamate; L-glutamate from N-formimidoyl-L-glutamate (transferase route): step 1/1. Folate-dependent enzyme, that displays both transferase and deaminase activity. Serves to channel one-carbon units from formiminoglutamate to the folate pool. This Dictyostelium discoideum (Social amoeba) protein is Formimidoyltransferase-cyclodeaminase (ftcd).